Consider the following 148-residue polypeptide: Snaclec convulxin subunit beta (148 aa).

The first 23 residues, 1–23 (MGRFIFVSFGLLVVFLSLSGSEA), serve as a signal peptide directing secretion. Disulfide bonds link C27–C38, C55–C144, and C121–C136. Positions 34–148 (YDRYCYKVFK…TYSFVCKFEA (115 aa)) constitute a C-type lectin domain.

Belongs to the snaclec family. As to quaternary structure, tetramer of heterodimers of alpha and beta subunits (alphabeta)(4); disulfide-linked. Expressed by the venom gland.

The protein resides in the secreted. Its function is as follows. Snake venom lectin that activates platelets by binding to the platelet collagen receptor glycoprotein VI (GP6). The indirect activation of integrin alpha-IIb/beta-3 (ITGA2B/ITGB3) also induced by the toxin is upstream the cytoskeletal translocation of GPIb, FcRgamma (FCER1G) and 14-3-3zeta (YWHAZ). The chain is Snaclec convulxin subunit beta from Crotalus durissus terrificus (South American rattlesnake).